A 613-amino-acid chain; its full sequence is UvrABC system protein C (613 aa).

One can recognise a GIY-YIG domain in the interval 13 to 92 (DKSGVYIMKD…IKKYKPKYNI (80 aa)). The UVR domain occupies 204 to 239 (DEIINDLRIQMETAAEQLDFEKAAQLRNKITSIKQL).

This sequence belongs to the UvrC family. In terms of assembly, interacts with UvrB in an incision complex.

Its subcellular location is the cytoplasm. In terms of biological role, the UvrABC repair system catalyzes the recognition and processing of DNA lesions. UvrC both incises the 5' and 3' sides of the lesion. The N-terminal half is responsible for the 3' incision and the C-terminal half is responsible for the 5' incision. In Ruminiclostridium cellulolyticum (strain ATCC 35319 / DSM 5812 / JCM 6584 / H10) (Clostridium cellulolyticum), this protein is UvrABC system protein C.